The sequence spans 792 residues: Host cell factor 2 (792 aa).

4 Kelch repeats span residues 34 to 79, 83 to 130, 207 to 255, and 257 to 303; these read LMII…GFVC, RILV…RLGH, KMYV…VIGN, and MYIF…VSDS. Positions 359-449 constitute a Fibronectin type-III 1 domain; the sequence is APSQVQLIKA…QPATKETSMK (91 aa). Residues 399–447 form a disordered region; the sequence is ASSDSSAAPNMQGVRMDPHRQGSNNIVPNSINDTINSTKTEQPATKETS. The segment covering 419-445 has biased composition (polar residues); that stretch reads QGSNNIVPNSINDTINSTKTEQPATKE. Residue Lys-553 forms a Glycyl lysine isopeptide (Lys-Gly) (interchain with G-Cter in SUMO2) linkage. Fibronectin type-III domains lie at 583 to 675 and 677 to 787; these read TPSN…TCIP and FPGA…GNNK.

As to quaternary structure, binds KMT2A/MLL1. Component of the MLL1/MLL complex, at least composed of KMT2A/MLL1, ASH2L, RBBP5, DPY30, WDR5, MEN1, HCFC1 and HCFC2. Interacts with TASOR. Highly expressed in testis. Detected at lower levels in spleen, thymus, prostate, ovary, small intestine and colon.

The protein localises to the cytoplasm. The protein resides in the nucleus. The chain is Host cell factor 2 (HCFC2) from Homo sapiens (Human).